Reading from the N-terminus, the 75-residue chain is MCDGDCRPLGFLLGLPFAFLSLLLSIIGVIIWIVGLLLSCICPCCLCVTVLVEIAIGLIKAPIHVMEWFMSKIPC.

Positions 1 to 29 (MCDGDCRPLGFLLGLPFAFLSLLLSIIGV) are cleaved as a signal peptide.

Expressed in shoot apical meristems (SAM); mostly specific to the L1 layer in the center of the meristem but also detected in the L2 layer in organ primordia. Also observed in the vasculature of seedling roots.

Its subcellular location is the secreted. With respect to regulation, counteracted by the antibiotic cefotaxime during responses to light stress. Functionally, signaling peptide involved in the regulation of lateral organs separation, including fruits and leaves. Involved in the perception of and response to light stress via the control of sinapoyl-malate accumulation, a UV-B protecting compound. The chain is Signaling peptide TAXIMIN 1 from Arabidopsis thaliana (Mouse-ear cress).